The chain runs to 1208 residues: Calmodulin-binding transcription activator 2 (1208 aa).

The segment at residues R30–C160 is a DNA-binding region (CG-1). Residues N78–K86 carry the Nuclear localization signal motif. Disordered regions lie at residues I269–G328, V366–A418, and Q437–P507. The segment covering P275–L288 has biased composition (pro residues). 2 stretches are compositionally biased toward low complexity: residues S294–S305 and T319–G328. 2 stretches are compositionally biased toward pro residues: residues S371–A380 and T464–P476. Positions D544–R622 constitute an IPT/TIG domain. ANK repeat units lie at residues R717–L750, F762–I792, and L796–V826. 2 disordered regions span residues V826 to I881 and N908 to P936. Residues P829–S853 are compositionally biased toward low complexity. 2 consecutive IQ domains span residues L1054 to V1083 and M1107 to L1136. The tract at residues Y1144–F1166 is disordered.

It belongs to the CAMTA family. May interact with calmodulin.

Its subcellular location is the nucleus. Its function is as follows. Transcription activator. May act as tumor suppressor. The polypeptide is Calmodulin-binding transcription activator 2 (Camta2) (Mus musculus (Mouse)).